The chain runs to 404 residues: MQQLKKVVLAYSGGVDTSVCIPYLKNEYGISEVVTFVADLGQGEDLELVRQKALNSGASKSIVGNLVNSFVERYAFPAIRANALYLDKYPLSTALARPLIAENLVNIAREINADAVAHGCTGKGNDQVRFDLAINALGPDLKIITPAREWNMSREEAILYGEKFGIPAPVSKKSPYSIDVNLLGRSIEAGILEDPMQEAPEDIFSMTSSVNNSPDSHQDIEIVFKNGFPVGINDQFLTPVEIIQRANNLAGKHGFGRIDMIEDRVVGIKSREIYETPGLLLLIKAHKELESITLNPDVIDFKGMVEKKWGQLVYQGFWFGPLKESLDAFISSTQTSVNGRVKIRLYKGNAIVIGRMSENNSLYREDLATYSKDDVFNHSLAEGFIYMWGMSNKIWAELNSKTKD.

Residues 10 to 18 (AYSGGVDTS) and alanine 38 contribute to the ATP site. Tyrosine 89 provides a ligand contact to L-citrulline. Glycine 119 contacts ATP. Threonine 121, asparagine 125, and aspartate 126 together coordinate L-aspartate. Residue asparagine 125 participates in L-citrulline binding. Residues arginine 129, serine 177, serine 186, glutamate 262, and tyrosine 274 each coordinate L-citrulline.

Belongs to the argininosuccinate synthase family. Type 1 subfamily. Homotetramer.

The protein localises to the cytoplasm. It carries out the reaction L-citrulline + L-aspartate + ATP = 2-(N(omega)-L-arginino)succinate + AMP + diphosphate + H(+). It participates in amino-acid biosynthesis; L-arginine biosynthesis; L-arginine from L-ornithine and carbamoyl phosphate: step 2/3. The sequence is that of Argininosuccinate synthase from Prochlorococcus marinus (strain AS9601).